Consider the following 140-residue polypeptide: Putative septation protein SpoVG (140 aa).

The tract at residues 88–127 (VAPQAGGLQGAEEPTAVEPAPQLQDESELPWEPGDDGEGA) is disordered. Over residues 112–124 (DESELPWEPGDDG) the composition is skewed to acidic residues.

The protein belongs to the SpoVG family.

Its function is as follows. Could be involved in septation. This Symbiobacterium thermophilum (strain DSM 24528 / JCM 14929 / IAM 14863 / T) protein is Putative septation protein SpoVG.